Consider the following 208-residue polypeptide: MKKFIFCFLCLWTLNIFAASKTYPNKLNRCKITRNIFNDYEPKVFETTNNLLRKTGRLSKFYGERILIKGKVLDQNCVPVADAKVYLWQAGSGGKYPYEPLKTRVDKRRFTSKSDSSFTGSGIATTNNKGEYYFISMLPYTSSRYLRSANIRIEHPSLTTLETRLDLSDQNMCDNECGEVNPILIEPQENMPSYCFDLVLQGTTLKRY.

This sequence belongs to the intradiol ring-cleavage dioxygenase family.

In Rickettsia conorii (strain ATCC VR-613 / Malish 7), this protein is Putative dioxygenase RC0543.